We begin with the raw amino-acid sequence, 383 residues long: Probable cytosolic iron-sulfur protein assembly protein 1 (383 aa).

WD repeat units follow at residues 10–49, 56–108, 135–175, 182–221, 228–275, 302–341, and 349–383; these read AHND…KFPL, THKR…VEYD, GHEN…EEFE, DHSQ…DEWS, GHEG…EDDE, VHKY…KWVI, and HGVH…LWKI.

It belongs to the WD repeat CIA1 family. As to quaternary structure, interacts with NAR1.

Its subcellular location is the cytoplasm. The protein localises to the nucleus. Functionally, essential component of the cytosolic iron-sulfur (Fe/S) protein assembly machinery. Required for the maturation of extramitochondrial Fe/S proteins. In Candida albicans (strain SC5314 / ATCC MYA-2876) (Yeast), this protein is Probable cytosolic iron-sulfur protein assembly protein 1.